The chain runs to 342 residues: Ferrochelatase (342 aa).

Residues His188 and Glu268 each contribute to the Fe cation site.

Belongs to the ferrochelatase family.

It localises to the cytoplasm. The catalysed reaction is heme b + 2 H(+) = protoporphyrin IX + Fe(2+). It participates in porphyrin-containing compound metabolism; protoheme biosynthesis; protoheme from protoporphyrin-IX: step 1/1. In terms of biological role, catalyzes the ferrous insertion into protoporphyrin IX. In Rickettsia prowazekii (strain Madrid E), this protein is Ferrochelatase.